The following is a 285-amino-acid chain: Nucleotide-binding protein PSPTO_4456 (285 aa).

An ATP-binding site is contributed by 8–15 (GRSGSGKS). 60–63 (DARN) lines the GTP pocket.

The protein belongs to the RapZ-like family.

Displays ATPase and GTPase activities. This is Nucleotide-binding protein PSPTO_4456 from Pseudomonas syringae pv. tomato (strain ATCC BAA-871 / DC3000).